The sequence spans 322 residues: Aspartate carbamoyltransferase catalytic subunit (322 aa).

Carbamoyl phosphate-binding residues include R65 and T66. K93 serves as a coordination point for L-aspartate. The carbamoyl phosphate site is built by R115, H143, and Q146. L-aspartate contacts are provided by R176 and R230. Carbamoyl phosphate is bound by residues G271 and P272.

Belongs to the aspartate/ornithine carbamoyltransferase superfamily. ATCase family. As to quaternary structure, heterododecamer (2C3:3R2) of six catalytic PyrB chains organized as two trimers (C3), and six regulatory PyrI chains organized as three dimers (R2).

It catalyses the reaction carbamoyl phosphate + L-aspartate = N-carbamoyl-L-aspartate + phosphate + H(+). Its pathway is pyrimidine metabolism; UMP biosynthesis via de novo pathway; (S)-dihydroorotate from bicarbonate: step 2/3. In terms of biological role, catalyzes the condensation of carbamoyl phosphate and aspartate to form carbamoyl aspartate and inorganic phosphate, the committed step in the de novo pyrimidine nucleotide biosynthesis pathway. The protein is Aspartate carbamoyltransferase catalytic subunit of Brucella anthropi (strain ATCC 49188 / DSM 6882 / CCUG 24695 / JCM 21032 / LMG 3331 / NBRC 15819 / NCTC 12168 / Alc 37) (Ochrobactrum anthropi).